Reading from the N-terminus, the 277-residue chain is Large ribosomal subunit protein uL2 (277 aa).

Residues 218-277 (PTVRGSVMNPNDHPHGGGEGKAPVGRKAPSTPWGKPALGLKTRNKKAKSDKLIVRRRNEK) are disordered. Residues 264-277 (AKSDKLIVRRRNEK) show a composition bias toward basic and acidic residues.

Belongs to the universal ribosomal protein uL2 family. In terms of assembly, part of the 50S ribosomal subunit. Forms a bridge to the 30S subunit in the 70S ribosome.

Its function is as follows. One of the primary rRNA binding proteins. Required for association of the 30S and 50S subunits to form the 70S ribosome, for tRNA binding and peptide bond formation. It has been suggested to have peptidyltransferase activity; this is somewhat controversial. Makes several contacts with the 16S rRNA in the 70S ribosome. The sequence is that of Large ribosomal subunit protein uL2 from Streptococcus pyogenes serotype M4 (strain MGAS10750).